We begin with the raw amino-acid sequence, 356 residues long: Surface presentation of antigens protein SpaS (356 aa).

Helical transmembrane passes span 29–49 (LIIACLTLGGIAYLVSYGSFN), 72–92 (LAVFGIGLKYLIPFMLLCLVC), 132–152 (VKDTVKTLLYLSSFVVAAIIC), 179–199 (LLALVLTCLACALIVLLLDAI), and 261–281 (HITIGIYFKPELMPIPMISVY).

Belongs to the type III secretion exporter family.

It is found in the cell inner membrane. Its function is as follows. Involved in a secretory pathway responsible for the surface presentation of determinants needed for the entry of Salmonella species into mammalian cells. The polypeptide is Surface presentation of antigens protein SpaS (spaS) (Salmonella typhimurium (strain LT2 / SGSC1412 / ATCC 700720)).